Here is a 684-residue protein sequence, read N- to C-terminus: Histone-lysine N-methyltransferase SETMAR (684 aa).

Residues 1-345 (MFAEAAKTTR…RLTLETMKMM (345 aa)) form a histone-lysine N-methyltransferase region. The Pre-SET domain maps to 73-136 (PGCICVKTPC…HCRNRVVQKG (64 aa)). Zn(2+) contacts are provided by Cys-75, Cys-77, Cys-82, Cys-87, Cys-89, Cys-118, Cys-122, Cys-124, and Cys-128. Residues 139–263 (FHFQVFKTHK…PEEELSYDYS (125 aa)) enclose the SET domain. S-adenosyl-L-methionine contacts are provided by residues 149–151 (KGW), Tyr-192, Arg-220, and 223–224 (NH). The Zn(2+) site is built by Cys-226, Cys-287, Cys-289, and Cys-294. Positions 283–299 (LRKPCYCGAKSCTAFLP) constitute a Post-SET domain. A mariner transposase Hsmar1 region spans residues 346-684 (LDKKQIRAIF…CVDCNGSYFD (339 aa)). DNA-binding regions (H-T-H motif) lie at residues 364-395 (KAAE…KFCK) and 428-448 (TTRE…RHLK). Asp-496 is a binding site for Mg(2+). Lys-498 is subject to N6-methyllysine. Ser-508 bears the Phosphoserine; by CHEK1 mark. Position 588 (Asp-588) interacts with Mg(2+).

This sequence in the N-terminal section; belongs to the class V-like SAM-binding methyltransferase superfamily. In the C-terminal section; belongs to the mariner transposase family. In terms of assembly, homodimer. Interacts with PRPF19; required for SETMAR recruitment to damaged DNA sites. Interacts with PCNA. Interacts with TOP2A; stimulates TOP2A topoisomerase activity. May interact with RAD9A and/or RAD9B. Mg(2+) is required as a cofactor. Methylated. Methylation regulates activity in DNA decatenation. In terms of processing, phosphorylated at Ser-508 by CHEK1 and dephosphorylated by protein phosphatase 2A/PP2A. Phosphorylation at Ser-508 is enhanced by DNA damage and promotes recruitment to damaged DNA. It stimulates DNA repair and impairs replication fork restart. In terms of tissue distribution, widely expressed, with highest expression in placenta and ovary and lowest expression in skeletal muscle.

The protein localises to the nucleus. It localises to the chromosome. The catalysed reaction is L-lysyl(36)-[histone H3] + 2 S-adenosyl-L-methionine = N(6),N(6)-dimethyl-L-lysyl(36)-[histone H3] + 2 S-adenosyl-L-homocysteine + 2 H(+). Functionally, protein derived from the fusion of a methylase with the transposase of an Hsmar1 transposon that plays a role in DNA double-strand break repair, stalled replication fork restart and DNA integration. DNA-binding protein, it is indirectly recruited to sites of DNA damage through protein-protein interactions. Also has kept a sequence-specific DNA-binding activity recognizing the 19-mer core of the 5'-terminal inverted repeats (TIRs) of the Hsmar1 element and displays a DNA nicking and end joining activity. In parallel, has a histone methyltransferase activity and methylates 'Lys-4' and 'Lys-36' of histone H3. Specifically mediates dimethylation of H3 'Lys-36' at sites of DNA double-strand break and may recruit proteins required for efficient DSB repair through non-homologous end-joining. Also regulates replication fork processing, promoting replication fork restart and regulating DNA decatenation through stimulation of the topoisomerase activity of TOP2A. This chain is Histone-lysine N-methyltransferase SETMAR, found in Homo sapiens (Human).